The following is a 395-amino-acid chain: MKRFLLCSFALVLLYPAGIDMYLVGLPRIAADLNASEAQLHIAFSVYLAGMATAMLFAGKIADQSGRKPVAIVGAIVFMMASLLCSRASEGSLFLSGRFLQGVGAGGCYVVAFAILRDTLDEHRRAKVLSLLNGITCIVPVLAPVMGHLIMLRFPWQSLFYTMSTMGIMVGLLSLFILRETRPARLAPRDLSPSSSAAESLVNRFFVSRLAITTLSVSVILTFVNASPVLLMEVMGFSRGDYAITMALTAGVSMVVSFSTPFALGLFKPRTLMLVSQGLFLTAGVTLSLAHTNTVTLFGLTLICAGFSVGFGVAMSQALGPFSLRAGVASSTLGIAQVCGSSLWIWLAAILGISAMNMLIGILIGCSIVSILLIFSVAPNRSVAEHEEIPYQSRS.

At 1–3 (MKR) the chain is on the cytoplasmic side. Residues 4–24 (FLLCSFALVLLYPAGIDMYLV) traverse the membrane as a helical segment. Residues 25 to 41 (GLPRIAADLNASEAQLH) lie on the Periplasmic side of the membrane. A helical membrane pass occupies residues 42–62 (IAFSVYLAGMATAMLFAGKIA). Topologically, residues 63-68 (DQSGRK) are cytoplasmic. The chain crosses the membrane as a helical span at residues 69 to 89 (PVAIVGAIVFMMASLLCSRAS). Residues 90 to 92 (EGS) lie on the Periplasmic side of the membrane. Residues 93-113 (LFLSGRFLQGVGAGGCYVVAF) traverse the membrane as a helical segment. The Cytoplasmic portion of the chain corresponds to 114–130 (AILRDTLDEHRRAKVLS). A helical membrane pass occupies residues 131-151 (LLNGITCIVPVLAPVMGHLIM). At 152-157 (LRFPWQ) the chain is on the periplasmic side. Residues 158–178 (SLFYTMSTMGIMVGLLSLFIL) form a helical membrane-spanning segment. The Cytoplasmic segment spans residues 179 to 216 (RETRPARLAPRDLSPSSSAAESLVNRFFVSRLAITTLS). The helical transmembrane segment at 217–237 (VSVILTFVNASPVLLMEVMGF) threads the bilayer. The Periplasmic segment spans residues 238–246 (SRGDYAITM). A helical transmembrane segment spans residues 247 to 267 (ALTAGVSMVVSFSTPFALGLF). Residues 268-270 (KPR) are Cytoplasmic-facing. A helical transmembrane segment spans residues 271-291 (TLMLVSQGLFLTAGVTLSLAH). Residues 292–294 (TNT) lie on the Periplasmic side of the membrane. The chain crosses the membrane as a helical span at residues 295–315 (VTLFGLTLICAGFSVGFGVAM). The Cytoplasmic segment spans residues 316–332 (SQALGPFSLRAGVASST). Residues 333-353 (LGIAQVCGSSLWIWLAAILGI) traverse the membrane as a helical segment. At 354–357 (SAMN) the chain is on the periplasmic side. The helical transmembrane segment at 358-378 (MLIGILIGCSIVSILLIFSVA) threads the bilayer. Residues 379 to 395 (PNRSVAEHEEIPYQSRS) lie on the Cytoplasmic side of the membrane.

The protein belongs to the major facilitator superfamily. DHA1 family. MdtL (TC 2.A.1.2.22) subfamily.

Its subcellular location is the cell inner membrane. This is Multidrug resistance protein MdtL (mdtL) from Salmonella typhi.